We begin with the raw amino-acid sequence, 427 residues long: 3-phosphoshikimate 1-carboxyvinyltransferase (427 aa).

3-phosphoshikimate contacts are provided by Lys22, Ser23, and Arg27. Residue Lys22 participates in phosphoenolpyruvate binding. The phosphoenolpyruvate site is built by Gly96 and Arg124. 3-phosphoshikimate contacts are provided by Ser169, Ser170, Gln171, Ser197, Asp313, Asn336, and Lys340. Gln171 is a phosphoenolpyruvate binding site. Asp313 (proton acceptor) is an active-site residue. Arg344, Arg386, and Lys411 together coordinate phosphoenolpyruvate.

It belongs to the EPSP synthase family. As to quaternary structure, monomer.

Its subcellular location is the cytoplasm. The catalysed reaction is 3-phosphoshikimate + phosphoenolpyruvate = 5-O-(1-carboxyvinyl)-3-phosphoshikimate + phosphate. Its pathway is metabolic intermediate biosynthesis; chorismate biosynthesis; chorismate from D-erythrose 4-phosphate and phosphoenolpyruvate: step 6/7. In terms of biological role, catalyzes the transfer of the enolpyruvyl moiety of phosphoenolpyruvate (PEP) to the 5-hydroxyl of shikimate-3-phosphate (S3P) to produce enolpyruvyl shikimate-3-phosphate and inorganic phosphate. In Salmonella dublin (strain CT_02021853), this protein is 3-phosphoshikimate 1-carboxyvinyltransferase.